The following is a 152-amino-acid chain: Large ribosomal subunit protein bL9 (152 aa).

Belongs to the bacterial ribosomal protein bL9 family.

Functionally, binds to the 23S rRNA. The polypeptide is Large ribosomal subunit protein bL9 (Synechococcus elongatus (strain ATCC 33912 / PCC 7942 / FACHB-805) (Anacystis nidulans R2)).